The chain runs to 140 residues: Nucleoside diphosphate kinase (140 aa).

Lys11, Phe59, Arg87, Thr93, Arg104, and Asn114 together coordinate ATP. The Pros-phosphohistidine intermediate role is filled by His117.

The protein belongs to the NDK family. In terms of assembly, homotetramer. Requires Mg(2+) as cofactor.

Its subcellular location is the cytoplasm. It carries out the reaction a 2'-deoxyribonucleoside 5'-diphosphate + ATP = a 2'-deoxyribonucleoside 5'-triphosphate + ADP. The enzyme catalyses a ribonucleoside 5'-diphosphate + ATP = a ribonucleoside 5'-triphosphate + ADP. Functionally, major role in the synthesis of nucleoside triphosphates other than ATP. The ATP gamma phosphate is transferred to the NDP beta phosphate via a ping-pong mechanism, using a phosphorylated active-site intermediate. The protein is Nucleoside diphosphate kinase of Rhodospirillum centenum (strain ATCC 51521 / SW).